We begin with the raw amino-acid sequence, 216 residues long: ATP-dependent dethiobiotin synthetase BioD (216 aa).

Asparagine 12–phenylalanine 17 provides a ligand contact to ATP. Threonine 16 contributes to the Mg(2+) binding site. Lysine 36 is an active-site residue. Serine 40 contacts substrate. ATP contacts are provided by residues aspartate 53, glutamate 110 to glycine 113, and asparagine 170 to glutamine 171. Residues aspartate 53 and glutamate 110 each contribute to the Mg(2+) site.

This sequence belongs to the dethiobiotin synthetase family. Homodimer. It depends on Mg(2+) as a cofactor.

The protein resides in the cytoplasm. It carries out the reaction (7R,8S)-7,8-diammoniononanoate + CO2 + ATP = (4R,5S)-dethiobiotin + ADP + phosphate + 3 H(+). It participates in cofactor biosynthesis; biotin biosynthesis; biotin from 7,8-diaminononanoate: step 1/2. Functionally, catalyzes a mechanistically unusual reaction, the ATP-dependent insertion of CO2 between the N7 and N8 nitrogen atoms of 7,8-diaminopelargonic acid (DAPA, also called 7,8-diammoniononanoate) to form a ureido ring. This chain is ATP-dependent dethiobiotin synthetase BioD, found in Vesicomyosocius okutanii subsp. Calyptogena okutanii (strain HA).